We begin with the raw amino-acid sequence, 541 residues long: 1'-carboxy-chondrochloren decarboxylase (541 aa).

Positions 39–226 (TTHRIPAIIS…TRMTIWLAPR (188 aa)) constitute an FAD-binding PCMH-type domain.

It catalyses the reaction 1'-carboxy-chondrochloren A + FAD + 2 H(+) = chondrochloren A + FADH2 + CO2. It carries out the reaction 1'-carboxy-chondrochloren B + FAD + 2 H(+) = chondrochloren B + FADH2 + CO2. Its pathway is antibiotic biosynthesis. With respect to regulation, activity is not affected by the addition of EDTA or/and EGTA chelators or in the presence of external metals like Zn(2+), Mg(2+), Mn(2+) and Fe(2+). Activity is inhibited under low oxygen conditions. Its function is as follows. Oxidative decarboxylase involved in the biosynthesis of the antibiotics chondrochloren A and chondrochloren B. Catalyzes the decarboxylation of biologically inactive pre-chondrochloren A and pre-chondrochloren B to yield mature chondrochloren A and chondrochloren B, respectively. Cannot decarboxylate free L-tyrosine, 3-chloro-tyrosine or a number of chlorinated and non-chlorinated analog substrates containing variable N-acyl chains. This is 1'-carboxy-chondrochloren decarboxylase from Chondromyces crocatus.